The chain runs to 57 residues: Large ribosomal subunit protein uL30 (57 aa).

The protein belongs to the universal ribosomal protein uL30 family. As to quaternary structure, part of the 50S ribosomal subunit.

The polypeptide is Large ribosomal subunit protein uL30 (Buchnera aphidicola subsp. Cinara cedri (strain Cc)).